Consider the following 503-residue polypeptide: Probable DNA ligase (503 aa).

Glu210 contributes to the ATP binding site. Catalysis depends on Lys212, which acts as the N6-AMP-lysine intermediate. ATP contacts are provided by Arg217, Arg232, Glu261, Phe296, Arg367, and Lys373.

Belongs to the ATP-dependent DNA ligase family. Mg(2+) serves as cofactor.

The enzyme catalyses ATP + (deoxyribonucleotide)n-3'-hydroxyl + 5'-phospho-(deoxyribonucleotide)m = (deoxyribonucleotide)n+m + AMP + diphosphate.. Functionally, DNA ligase that seals nicks in double-stranded DNA during DNA replication, DNA recombination and DNA repair. This is Probable DNA ligase from Rhodococcus jostii (strain RHA1).